The chain runs to 362 residues: Lipoprotein p35 (362 aa).

A signal peptide spans 1–30 (MKIKKIKLLKALALTGAFGIVATVPVIVSS). C31 carries the N-palmitoyl cysteine lipid modification. C31 carries S-diacylglycerol cysteine lipidation. The tract at residues 33–53 (STSENNGNGNGNGGTDGNTQQ) is disordered.

Belongs to the p35 lipoprotein family. The N-terminus is blocked.

It is found in the cell membrane. In terms of biological role, major M.penetrans antigen. The polypeptide is Lipoprotein p35 (Malacoplasma penetrans (Mycoplasma penetrans)).